Consider the following 485-residue polypeptide: MTITPQHLIALLPLLIVGLTVVVVMLSIAWRRNHFLNATLSVIGLNAALVSLWFVGQAGAMDVTPLMRVDGFAMLYTGLVLLASLATCTFAYPWLEGYNDNQEEFYLLVLIAALGGILLANANHLAALFLGIELISLPLFGLIGYAFRQKRSLEASIKYTILSAAASSFLLFGMALVYAQSGNLSFVALGKSLGDGMLHEPLLLAGFGLMIVGLGFKLSLVPFHLWTPDVYQGAPAPVSTFLATASKIAIFGVVMRLFLYAPVGDSEAVRIVLGVIAFASIIFGNLMALSQTNIKRLLGYSSISHLGYLLVALIALQSGEMSMEAVGVYLAGYLFSSLGAFGVVSLMSSPFRGPDADSLFSYRGLFWHRPILAAVMTVMMLSLAGIPMTLGFIGKFYVLAVGVQASLWWLVAAVVVGSAIGLYYYLRVAVSLYLSAPQQLNRDAPSNWQYSAGGIVVLISALLVLVLGIYPQPLISIVQLATPLM.

Transmembrane regions (helical) follow at residues 8-28 (LIAL…MLSI), 35-55 (FLNA…LWFV), 71-91 (GFAM…CTFA), 105-125 (FYLL…ANHL), 127-147 (ALFL…GYAF), 159-179 (YTIL…LVYA), 203-223 (LLAG…LVPF), 235-255 (PAPV…GVVM), 271-291 (IVLG…ALSQ), 297-317 (LLGY…IALQ), 326-346 (VGVY…VVSL), 373-393 (AAVM…LGFI), 408-430 (WWLV…RVAV), and 455-475 (IVVL…QPLI).

It belongs to the complex I subunit 2 family. As to quaternary structure, NDH-1 is composed of 13 different subunits. Subunits NuoA, H, J, K, L, M, N constitute the membrane sector of the complex.

It is found in the cell inner membrane. The enzyme catalyses a quinone + NADH + 5 H(+)(in) = a quinol + NAD(+) + 4 H(+)(out). Its function is as follows. NDH-1 shuttles electrons from NADH, via FMN and iron-sulfur (Fe-S) centers, to quinones in the respiratory chain. The immediate electron acceptor for the enzyme in this species is believed to be ubiquinone. Couples the redox reaction to proton translocation (for every two electrons transferred, four hydrogen ions are translocated across the cytoplasmic membrane), and thus conserves the redox energy in a proton gradient. The chain is NADH-quinone oxidoreductase subunit N from Citrobacter koseri (strain ATCC BAA-895 / CDC 4225-83 / SGSC4696).